The chain runs to 1005 residues: Vacuolar membrane protease (1005 aa).

At 1-14 the chain is on the cytoplasmic side; that stretch reads MAKETTARSILGYQ. The chain crosses the membrane as a helical span at residues 15–35; the sequence is TLPTTALIALIYVVAFFSVLV. The Vacuolar portion of the chain corresponds to 36–353; sequence SDQLPSIPHP…PEDSAKQKSK (318 aa). An N-linked (GlcNAc...) asparagine glycan is attached at Asn-107. Zn(2+)-binding residues include His-152 and Asp-164. Glu-196 (proton acceptor) is an active-site residue. Glu-197 lines the Zn(2+) pocket. Asn-213 carries N-linked (GlcNAc...) asparagine glycosylation. Residues Glu-222 and His-311 each contribute to the Zn(2+) site. A helical transmembrane segment spans residues 354-374; that stretch reads PGVYFDRPVVLALLWAIGAVL. Over 375-448 the chain is Cytoplasmic; it reads KHNAGSPPPP…LITVWKQASF (74 aa). The disordered stretch occupies residues 379–420; that stretch reads GSPPPPPKPTVPHSANNASAGTGRPGASTRQPTRSFGSNEDA. A compositionally biased stretch (polar residues) spans 406–419; that stretch reads STRQPTRSFGSNED. A helical transmembrane segment spans residues 449–469; the sequence is WIALIVTVGLQALLAWGYVAI. Topologically, residues 470-479 are vacuolar; the sequence is NPFTIYSRPY. A helical membrane pass occupies residues 480–500; sequence FVLLSFFALSFFSMTLVLQAA. Topologically, residues 501-519 are cytoplasmic; it reads FPSSPVKHAIEVREQEKTT. The chain crosses the membrane as a helical span at residues 520-540; it reads ILLHLHLLSWIALLLSTILIG. At 541–543 the chain is on the vacuolar side; it reads KSQ. The helical transmembrane segment at 544-564 threads the bilayer; the sequence is VGSFYVVTVWYLGIWAATVIG. Residues 565-644 are Cytoplasmic-facing; it reads TLQPILVSKR…RKTNSKSKED (80 aa). Positions 577–640 are disordered; that stretch reads DKGKRRARRS…ASNRRKTNSK (64 aa). Residues 588–606 show a composition bias toward low complexity; sequence SASTSSSSSSSSSSSSGSD. The chain crosses the membrane as a helical span at residues 645 to 665; the sequence is GAIGWWIAQVLLTVPPVVMLV. The Vacuolar segment spans residues 666–686; the sequence is GQITSIVLEAMNQTLTDGNSA. An N-linked (GlcNAc...) asparagine glycan is attached at Asn-677. The chain crosses the membrane as a helical span at residues 687-707; it reads WSIYLLTALLATMLVLPVAPF. The Cytoplasmic portion of the chain corresponds to 708-713; sequence SPKLHR. Residues 714–734 form a helical membrane-spanning segment; the sequence is GLIFLSAAVFVGFTIYLWVVF. Residues 735–1005 are Vacuolar-facing; the sequence is PFTRQDPFKV…VEASAPFTVV (271 aa). Residues Asn-761 and Asn-961 are each glycosylated (N-linked (GlcNAc...) asparagine).

This sequence belongs to the peptidase M28 family. The cofactor is Zn(2+).

The protein resides in the vacuole membrane. In terms of biological role, may be involved in vacuolar sorting and osmoregulation. This is Vacuolar membrane protease from Coprinopsis cinerea (strain Okayama-7 / 130 / ATCC MYA-4618 / FGSC 9003) (Inky cap fungus).